Reading from the N-terminus, the 139-residue chain is Cellular retinoic acid-binding protein 2 (139 aa).

The short motif at 21-31 is the Nuclear localization signal element; the sequence is KALGVNMMMRK. A Glycyl lysine isopeptide (Lys-Gly) (interchain with G-Cter in SUMO) cross-link involves residue lysine 103. 134 to 136 serves as a coordination point for all-trans-retinoate; sequence RVY.

This sequence belongs to the calycin superfamily. Fatty-acid binding protein (FABP) family. As to quaternary structure, interacts with importin alpha, RXR and RARA. Post-translationally, sumoylated in response to retinoic acid binding, sumoylation is critical for dissociation from ER and subsequent nuclear translocation.

It localises to the cytoplasm. It is found in the endoplasmic reticulum. The protein localises to the nucleus. Transports retinoic acid to the nucleus. Regulates the access of retinoic acid to the nuclear retinoic acid receptors. The sequence is that of Cellular retinoic acid-binding protein 2 (Crabp2) from Rattus norvegicus (Rat).